We begin with the raw amino-acid sequence, 278 residues long: 4-diphosphocytidyl-2-C-methyl-D-erythritol kinase (278 aa).

Lys9 is an active-site residue. 93-103 is a binding site for ATP; it reads PISAGLAGGSS. Asp135 is an active-site residue.

It belongs to the GHMP kinase family. IspE subfamily.

The catalysed reaction is 4-CDP-2-C-methyl-D-erythritol + ATP = 4-CDP-2-C-methyl-D-erythritol 2-phosphate + ADP + H(+). It participates in isoprenoid biosynthesis; isopentenyl diphosphate biosynthesis via DXP pathway; isopentenyl diphosphate from 1-deoxy-D-xylulose 5-phosphate: step 3/6. Catalyzes the phosphorylation of the position 2 hydroxy group of 4-diphosphocytidyl-2C-methyl-D-erythritol. In Finegoldia magna (strain ATCC 29328 / DSM 20472 / WAL 2508) (Peptostreptococcus magnus), this protein is 4-diphosphocytidyl-2-C-methyl-D-erythritol kinase.